Here is a 529-residue protein sequence, read N- to C-terminus: Neuronal acetylcholine receptor subunit alpha-2 (529 aa).

An N-terminal signal peptide occupies residues 1–26 (MGPSCPVFLSFTKLSLWWLLLTPAGG). A disordered region spans residues 27 to 56 (EEAKRPPPRAPGDPLSSPSPTALPQGGSHT). The Extracellular segment spans residues 27–264 (EEAKRPPPRA…VTYAFVIRRL (238 aa)). N-linked (GlcNAc...) asparagine glycosylation is found at Asn79 and Asn129. A disulfide bond links Cys183 and Cys197. Asn235 is a glycosylation site (N-linked (GlcNAc...) asparagine). Cys247 and Cys248 are joined by a disulfide. 3 helical membrane-spanning segments follow: residues 265–289 (PLFY…VFYL), 297–315 (ITLC…LLIT), and 331–352 (YLLF…VLNV). The Cytoplasmic segment spans residues 353–502 (HHRSPSTHTM…WKYVAMVIDR (150 aa)). A helical transmembrane segment spans residues 503-521 (IFLWLFIIVCFLGTIGLFL).

Belongs to the ligand-gated ion channel (TC 1.A.9) family. Acetylcholine receptor (TC 1.A.9.1) subfamily. Alpha-2/CHRNA2 sub-subfamily. In terms of assembly, neuronal AChR is composed of two different types of subunits: alpha and non-alpha (beta). CHRNA2/alpha-2 subunit can be combined to CHRNB2/beta-2 or CHRNB4/beta-4 to give rise to functional receptors. Both CHRNA2:CHRNB2 and CHRNA2:CHRNB4 nAChR complexes are heteropentamers with two subtypes: LS (low agonist sensitivity) with a (CHRNA2)3:(CHRNB2/4)2 and HS (high agonist sensitivity) with a (CHRNA2)2:(CHRNB2/4)3 stoichiometries; the subtypes differ in their subunit binding interfaces which are involved in ligand binding.

The protein localises to the synaptic cell membrane. It is found in the cell membrane. The catalysed reaction is Ca(2+)(in) = Ca(2+)(out). It carries out the reaction K(+)(in) = K(+)(out). It catalyses the reaction Na(+)(in) = Na(+)(out). Its function is as follows. Component of neuronal acetylcholine receptors (nAChRs) that function as pentameric, ligand-gated cation channels with high calcium permeability among other activities. nAChRs are excitatory neurotrasnmitter receptors formed by a collection of nAChR subunits known to mediate synaptic transmission in the nervous system and the neuromuscular junction. Each nAchR subunit confers differential attributes to channel properties, including activation, deactivation and desensitization kinetics, pH sensitivity, cation permeability, and binding to allosteric modulators. CHRNA2 forms heteropentameric neuronal acetylcholine receptors with CHRNB2 and CHRNB4 and plays a role in nicotine dependence. The chain is Neuronal acetylcholine receptor subunit alpha-2 from Homo sapiens (Human).